The chain runs to 413 residues: Arginine biosynthesis bifunctional protein ArgJ (413 aa).

Residues Thr158, Lys184, Thr195, Glu285, Asn408, and Ser413 each contribute to the substrate site. Catalysis depends on Thr195, which acts as the Nucleophile.

The protein belongs to the ArgJ family. In terms of assembly, heterotetramer of two alpha and two beta chains.

Its subcellular location is the cytoplasm. It carries out the reaction N(2)-acetyl-L-ornithine + L-glutamate = N-acetyl-L-glutamate + L-ornithine. The enzyme catalyses L-glutamate + acetyl-CoA = N-acetyl-L-glutamate + CoA + H(+). It functions in the pathway amino-acid biosynthesis; L-arginine biosynthesis; L-ornithine and N-acetyl-L-glutamate from L-glutamate and N(2)-acetyl-L-ornithine (cyclic): step 1/1. It participates in amino-acid biosynthesis; L-arginine biosynthesis; N(2)-acetyl-L-ornithine from L-glutamate: step 1/4. In terms of biological role, catalyzes two activities which are involved in the cyclic version of arginine biosynthesis: the synthesis of N-acetylglutamate from glutamate and acetyl-CoA as the acetyl donor, and of ornithine by transacetylation between N(2)-acetylornithine and glutamate. In Mesorhizobium japonicum (strain LMG 29417 / CECT 9101 / MAFF 303099) (Mesorhizobium loti (strain MAFF 303099)), this protein is Arginine biosynthesis bifunctional protein ArgJ.